The sequence spans 345 residues: Nuclear distribution protein nudE-like 1 (345 aa).

The stretch at 28–190 (QSFQEARDEL…LAVRERQQEV (163 aa)) forms a coiled coil. Residues 56 to 166 (VQAEQRNRDL…LDEKESLLVS (111 aa)) are self-association. Positions 64 to 189 (DLQADNQRLK…ELAVRERQQE (126 aa)) are interaction with KATNB1. Positions 114–133 (YVRELEQANDDLERAKRATI) are required for interaction with PAFAH1B1. Residues 175 to 345 (RDLRQELAVR…SAPGMLPLSV (171 aa)) form an interaction with CENPF region. Residues 189-256 (EVTRKSAPSS…SARISALNIV (68 aa)) are interaction with YWHAE. The tract at residues 191–345 (TRKSAPSSPT…SAPGMLPLSV (155 aa)) is interaction with NEFL. The segment at 195–256 (APSSPTLDCE…SARISALNIV (62 aa)) is interaction with KATNA1. S215 carries the post-translational modification Phosphoserine. The segment at 217–240 (PATPVGKGTENSFPSPKAIPNGFG) is disordered. Residue T219 is modified to Phosphothreonine. At S231 the chain carries Phosphoserine. The interval 241–280 (TSPLTPSARISALNIVGDLLRKVGALESKLAACRNFAKDQ) is interaction with DISC1. S242 bears the Phosphoserine; by CDK1 mark. Phosphothreonine; by CDK1 and MAPK1 is present on T245. The interval 256-291 (VGDLLRKVGALESKLAACRNFAKDQASRKSYVPGSV) is required for localization to the centrosome and interaction with dynein, dynactin, tubulin gamma, PCM1 and PCNT. C273 carries S-palmitoyl cysteine; by ZDHHC2, ZDHHC3 and ZDHHC7 lipidation. The segment at 314-345 (KGAVNGFDPAPPPPGLGSSRPSSAPGMLPLSV) is disordered. The segment covering 329-339 (LGSSRPSSAPG) has biased composition (low complexity). Residue S344 is modified to Phosphoserine.

Belongs to the nudE family. As to quaternary structure, interacts with PLEKHM1 (via N- and C-terminus). Interacts with dynactin, PCM1 and PCNT. Interacts (via C-terminus) with CENPF. Self-associates. Interacts with DISC1, dynein, tubulin gamma, KATNA1, KATNB1, microtubules, PAFAHB1 and YWHAE. Interacts directly with NEFL and indirectly with NEFH. Interacts with ZNF365. Interacts with GTP-bound RAB9A; the interaction may lead to RAB9A-dynein motor tethering. Post-translationally, phosphorylated by CDK1 and MAPK1. Phosphorylated in mitosis. Phosphorylated by CDK5. Phosphorylation by CDK5 promotes interaction with KATNA1 and YWHAE. In terms of processing, palmitoylation at Cys-273 reduces affinity for dynein. As to expression, expressed in brain, liver, lung and testis (at protein level). Expressed in brain, epididymis, eye, heart, kidney, large intestine, liver, ovary, pancreas, prostate, skeletal muscle, smooth muscle, spleen, submaxillary gland, testis, thymus and thyroid. Within the brain expression is pronounced in the cortex, hippocampus, olfactory bulb, striatum, thalamic and hypothalamic structures and in the molecular layer of the cerebellum. Largely excluded from cortical progenitor cells which express NDE1.

It is found in the cytoplasm. It localises to the cytoskeleton. The protein localises to the microtubule organizing center. Its subcellular location is the centrosome. The protein resides in the chromosome. It is found in the centromere. It localises to the kinetochore. The protein localises to the spindle. Required for organization of the cellular microtubule array and microtubule anchoring at the centrosome. May regulate microtubule organization at least in part by targeting the microtubule severing protein KATNA1 to the centrosome. Also positively regulates the activity of the minus-end directed microtubule motor protein dynein. May enhance dynein-mediated microtubule sliding by targeting dynein to the microtubule plus ends. Required for several dynein- and microtubule-dependent processes such as the maintenance of Golgi integrity, the centripetal motion of secretory vesicles and the coupling of the nucleus and centrosome. Also required during brain development for the migration of newly formed neurons from the ventricular/subventricular zone toward the cortical plate. Plays a role, together with DISC1, in the regulation of neurite outgrowth. Required for mitosis in some cell types but appears to be dispensible for mitosis in cortical neuronal progenitors, which instead requires NDE1. Facilitates the polymerization of neurofilaments from the individual subunits NEFH and NEFL. Positively regulates lysosome peripheral distribution and ruffled border formation in osteoclasts. Plays a role, together with DISC1, in the regulation of neurite outgrowth. May act as a RAB9A/B effector that tethers RAB9-associated late endosomes to the dynein motor for their retrograde transport to the trans-Golgi network. The sequence is that of Nuclear distribution protein nudE-like 1 from Mus musculus (Mouse).